The following is a 291-amino-acid chain: ATP synthase gamma chain (291 aa).

Belongs to the ATPase gamma chain family. F-type ATPases have 2 components, CF(1) - the catalytic core - and CF(0) - the membrane proton channel. CF(1) has five subunits: alpha(3), beta(3), gamma(1), delta(1), epsilon(1). CF(0) has three main subunits: a, b and c.

It localises to the cell inner membrane. In terms of biological role, produces ATP from ADP in the presence of a proton gradient across the membrane. The gamma chain is believed to be important in regulating ATPase activity and the flow of protons through the CF(0) complex. The sequence is that of ATP synthase gamma chain from Pelagibacter ubique (strain HTCC1062).